The sequence spans 362 residues: GTPase Obg (362 aa).

The 159-residue stretch at 1 to 159 (MKFIDEARIE…RKLKLELKVL (159 aa)) folds into the Obg domain. A disordered region spans residues 129-148 (HFKSSTNRAPRQKTNGKEGE). Positions 130-141 (FKSSTNRAPRQK) are enriched in polar residues. Residues 160-334 (ADVGLLGMPN…LCYALQDYLD (175 aa)) form the OBG-type G domain. GTP-binding positions include 166 to 173 (GMPNAGKS), 191 to 195 (FTTLH), 213 to 216 (DIPG), 284 to 287 (NKVD), and 315 to 317 (SAL). Mg(2+) contacts are provided by Ser-173 and Thr-193. Residues 340-362 (RDDAEERAADPRYQDQAADKSPD) are disordered.

The protein belongs to the TRAFAC class OBG-HflX-like GTPase superfamily. OBG GTPase family. In terms of assembly, monomer. It depends on Mg(2+) as a cofactor.

It localises to the cytoplasm. In terms of biological role, an essential GTPase which binds GTP, GDP and possibly (p)ppGpp with moderate affinity, with high nucleotide exchange rates and a fairly low GTP hydrolysis rate. Plays a role in control of the cell cycle, stress response, ribosome biogenesis and in those bacteria that undergo differentiation, in morphogenesis control. This is GTPase Obg from Polynucleobacter asymbioticus (strain DSM 18221 / CIP 109841 / QLW-P1DMWA-1) (Polynucleobacter necessarius subsp. asymbioticus).